The primary structure comprises 178 residues: MAELTTLARPYAKAAFEHAQAHQQLASWSAMLGLAAAVSQDDTMQRVLKAPRLTSAEKASTFIEVCGDKFDAQAQNFIHVAAENDRLLLLPEISALFDLYKAEQEKSVDVDVTSAFALNQEQQDKLAKVLSARLGREVRLHAAEDASLIGGVVIRAGDLVIDGSIRGKLANLAEALKS.

It belongs to the ATPase delta chain family. As to quaternary structure, F-type ATPases have 2 components, F(1) - the catalytic core - and F(0) - the membrane proton channel. F(1) has five subunits: alpha(3), beta(3), gamma(1), delta(1), epsilon(1). F(0) has three main subunits: a(1), b(2) and c(10-14). The alpha and beta chains form an alternating ring which encloses part of the gamma chain. F(1) is attached to F(0) by a central stalk formed by the gamma and epsilon chains, while a peripheral stalk is formed by the delta and b chains.

It localises to the cell inner membrane. Functionally, f(1)F(0) ATP synthase produces ATP from ADP in the presence of a proton or sodium gradient. F-type ATPases consist of two structural domains, F(1) containing the extramembraneous catalytic core and F(0) containing the membrane proton channel, linked together by a central stalk and a peripheral stalk. During catalysis, ATP synthesis in the catalytic domain of F(1) is coupled via a rotary mechanism of the central stalk subunits to proton translocation. This protein is part of the stalk that links CF(0) to CF(1). It either transmits conformational changes from CF(0) to CF(1) or is implicated in proton conduction. This chain is ATP synthase subunit delta, found in Pseudomonas fluorescens (strain ATCC BAA-477 / NRRL B-23932 / Pf-5).